The primary structure comprises 129 residues: Small ribosomal subunit protein uS11 (129 aa).

Belongs to the universal ribosomal protein uS11 family. In terms of assembly, part of the 30S ribosomal subunit. Interacts with proteins S7 and S18. Binds to IF-3.

Located on the platform of the 30S subunit, it bridges several disparate RNA helices of the 16S rRNA. Forms part of the Shine-Dalgarno cleft in the 70S ribosome. The protein is Small ribosomal subunit protein uS11 of Hamiltonella defensa subsp. Acyrthosiphon pisum (strain 5AT).